We begin with the raw amino-acid sequence, 231 residues long: Putative cobalt transport protein CbiM 1 (231 aa).

6 consecutive transmembrane segments (helical) span residues 6-26 (GFLP…FLIY), 41-61 (VLPL…VDIP), 79-99 (FFGP…QALL), 107-127 (TLGA…WLVF), 136-156 (VPLG…TYLI), and 172-192 (LTAF…ISII).

Belongs to the CbiM family. Forms an energy-coupling factor (ECF) transporter complex composed of an ATP-binding protein (A component, CbiO), a transmembrane protein (T component, CbiQ) and 2 possible substrate-capture proteins (S components, CbiM and CbiN) of unknown stoichimetry.

The protein resides in the cell membrane. Its pathway is cofactor biosynthesis; adenosylcobalamin biosynthesis. Functionally, part of the energy-coupling factor (ECF) transporter complex CbiMNOQ involved in cobalt import. The chain is Putative cobalt transport protein CbiM 1 from Methanocorpusculum labreanum (strain ATCC 43576 / DSM 4855 / Z).